The chain runs to 99 residues: uncharacterized protein (99 aa).

A coiled-coil region spans residues 43–95; that stretch reads ENEEIYADQVRRIKLRLRELRETYATSEDNWRELMDNLEELRDQIERLAIRGG.

This is an uncharacterized protein from Archaeoglobus fulgidus (strain ATCC 49558 / DSM 4304 / JCM 9628 / NBRC 100126 / VC-16).